The primary structure comprises 431 residues: Glutamate-1-semialdehyde 2,1-aminomutase (431 aa).

Lys269 is subject to N6-(pyridoxal phosphate)lysine.

The protein belongs to the class-III pyridoxal-phosphate-dependent aminotransferase family. HemL subfamily. As to quaternary structure, homodimer. Requires pyridoxal 5'-phosphate as cofactor.

The protein resides in the cytoplasm. It carries out the reaction (S)-4-amino-5-oxopentanoate = 5-aminolevulinate. It participates in porphyrin-containing compound metabolism; protoporphyrin-IX biosynthesis; 5-aminolevulinate from L-glutamyl-tRNA(Glu): step 2/2. It functions in the pathway porphyrin-containing compound metabolism; chlorophyll biosynthesis. The polypeptide is Glutamate-1-semialdehyde 2,1-aminomutase (Chlorobium luteolum (strain DSM 273 / BCRC 81028 / 2530) (Pelodictyon luteolum)).